The sequence spans 201 residues: Small ribosomal subunit protein uS4c (201 aa).

The segment at Gly-20 to Tyr-44 is disordered. Residues Met-89 to Asn-150 form the S4 RNA-binding domain.

Belongs to the universal ribosomal protein uS4 family. Part of the 30S ribosomal subunit. Contacts protein S5. The interaction surface between S4 and S5 is involved in control of translational fidelity.

The protein resides in the plastid. The protein localises to the chloroplast. Functionally, one of the primary rRNA binding proteins, it binds directly to 16S rRNA where it nucleates assembly of the body of the 30S subunit. Its function is as follows. With S5 and S12 plays an important role in translational accuracy. The sequence is that of Small ribosomal subunit protein uS4c (rps4) from Lotus japonicus (Lotus corniculatus var. japonicus).